The chain runs to 874 residues: Valine--tRNA ligase (874 aa).

The segment covering 1–10 has biased composition (polar residues); sequence MTENSQQQPP. A disordered region spans residues 1–23; the sequence is MTENSQQQPPASEPELPTQYAPA. Residues 57 to 67 carry the 'HIGH' region motif; it reads PNVTGSLHLGH. A 'KMSKS' region motif is present at residues 531–535; that stretch reads KMSKS. Lysine 534 serves as a coordination point for ATP. The stretch at 806–871 forms a coiled coil; it reads IDIVAERKRL…ARIQAQLDRM (66 aa).

Belongs to the class-I aminoacyl-tRNA synthetase family. ValS type 1 subfamily. In terms of assembly, monomer.

The protein localises to the cytoplasm. The catalysed reaction is tRNA(Val) + L-valine + ATP = L-valyl-tRNA(Val) + AMP + diphosphate. Functionally, catalyzes the attachment of valine to tRNA(Val). As ValRS can inadvertently accommodate and process structurally similar amino acids such as threonine, to avoid such errors, it has a 'posttransfer' editing activity that hydrolyzes mischarged Thr-tRNA(Val) in a tRNA-dependent manner. The sequence is that of Valine--tRNA ligase from Streptomyces avermitilis (strain ATCC 31267 / DSM 46492 / JCM 5070 / NBRC 14893 / NCIMB 12804 / NRRL 8165 / MA-4680).